The primary structure comprises 500 residues: MGLTVAPFAAWFLAWIALAPLWIFVVSSKRKNYPPSSLLLLGLTWGIGYHGVALFWITGIHPMDWLGVPWWPSLAITIFCWSFISFYGGLFGAIWAACLTHISEQKSWLRILIGTAMWCVLESLWSAGPLWWSSLAYTQSPHNLAILHLGQISGPNLVTAAIVSVNGIVAEAWLNRKQGLLGRYLAIATGLLITLHLIGFGLYTAPIAKSSDTALKVGIVQGNIPNKIKLLPQGLSRAITGYTDGYLTLVNQGVEAVLTPEGALPFFQRNLPTTPLVSAVREKGVVAWIGAFGDRGRSYTNSLFTVNSQGEITSRYDKSKLVPLGEYIPFEGIIGGLVQRLSPLDEHQVHGSPNQIFDTPFGRAIVGICYESAFPEVFRSQAAAGGQFILSSSNDAHYSAAMPFQHHAQDIMRAIETDRWSARATNTGYSAFVDPHGRTLWISGYNTYETHAETIYRRQTQNLYVRWGDWFTPLLVGLSFLGWSLNIFWRNDANANSKLR.

Transmembrane regions (helical) follow at residues 5 to 25 (VAPF…WIFV), 38 to 58 (LLLL…FWIT), 74 to 94 (LAIT…FGAI), 111 to 131 (ILIG…GPLW), 145 to 165 (AILH…IVSV), and 185 to 205 (LAIA…LYTA). The CN hydrolase domain maps to 215 to 462 (LKVGIVQGNI…ETIYRRQTQN (248 aa)). Residue glutamate 261 is the Proton acceptor of the active site. Residue lysine 318 is part of the active site. The Nucleophile role is filled by cysteine 369. The chain crosses the membrane as a helical span at residues 469–489 (DWFTPLLVGLSFLGWSLNIFW).

It belongs to the CN hydrolase family. Apolipoprotein N-acyltransferase subfamily.

The protein resides in the cell inner membrane. The catalysed reaction is N-terminal S-1,2-diacyl-sn-glyceryl-L-cysteinyl-[lipoprotein] + a glycerophospholipid = N-acyl-S-1,2-diacyl-sn-glyceryl-L-cysteinyl-[lipoprotein] + a 2-acyl-sn-glycero-3-phospholipid + H(+). The protein operates within protein modification; lipoprotein biosynthesis (N-acyl transfer). In terms of biological role, catalyzes the phospholipid dependent N-acylation of the N-terminal cysteine of apolipoprotein, the last step in lipoprotein maturation. This Nostoc sp. (strain PCC 7120 / SAG 25.82 / UTEX 2576) protein is Apolipoprotein N-acyltransferase.